The primary structure comprises 200 residues: Large ribosomal subunit protein bL25 (200 aa).

The protein belongs to the bacterial ribosomal protein bL25 family. CTC subfamily. As to quaternary structure, part of the 50S ribosomal subunit; part of the 5S rRNA/L5/L18/L25 subcomplex. Contacts the 5S rRNA. Binds to the 5S rRNA independently of L5 and L18.

Its function is as follows. This is one of the proteins that binds to the 5S RNA in the ribosome where it forms part of the central protuberance. In Leifsonia xyli subsp. xyli (strain CTCB07), this protein is Large ribosomal subunit protein bL25.